Reading from the N-terminus, the 389-residue chain is NADH-quinone oxidoreductase subunit D (389 aa).

It belongs to the complex I 49 kDa subunit family. In terms of assembly, NDH-1 is composed of 14 different subunits. Subunits NuoB, C, D, E, F, and G constitute the peripheral sector of the complex.

The protein resides in the cell inner membrane. It carries out the reaction a quinone + NADH + 5 H(+)(in) = a quinol + NAD(+) + 4 H(+)(out). Its function is as follows. NDH-1 shuttles electrons from NADH, via FMN and iron-sulfur (Fe-S) centers, to quinones in the respiratory chain. The immediate electron acceptor for the enzyme in this species is believed to be ubiquinone. Couples the redox reaction to proton translocation (for every two electrons transferred, four hydrogen ions are translocated across the cytoplasmic membrane), and thus conserves the redox energy in a proton gradient. This Rickettsia typhi (strain ATCC VR-144 / Wilmington) protein is NADH-quinone oxidoreductase subunit D.